The sequence spans 212 residues: MDLPPLSLDQLSAVITAGPTPTDLYTSLSAYEEQACLLSATDPSEKDLLLEFYTAFFFSHLLTDQICEARALTRRIPREISRLDAMQTCSLLLRAVWQSKHTEIYKILRELPWPGRSQPLVQRYESYFQEKTLVEMSNSYETIRIAAAATYLGLDPAAVEGDIIEKFTACGWKWDSEKQLLHPKPVVTAPPKDDSLQNELSRVMALISNQGS.

A PCI domain is found at 26–193; that stretch reads TSLSAYEEQA…KPVVTAPPKD (168 aa).

The protein belongs to the CSN8 family. In terms of assembly, component of the COP9 signalosome (CSN) complex.

The protein localises to the cytoplasm. Its subcellular location is the nucleus. Its function is as follows. Component of the COP9 signalosome (CSN) complex that acts as an regulator of the ubiquitin (Ubl) conjugation pathway by mediating the deneddylation of the cullin subunit of SCF-type E3 ubiquitin-protein ligase complexes. The CSN complex seems to link protein degradation to sexual development. The polypeptide is COP9 signalosome complex subunit 8 (csnH) (Emericella nidulans (strain FGSC A4 / ATCC 38163 / CBS 112.46 / NRRL 194 / M139) (Aspergillus nidulans)).